The chain runs to 901 residues: HTH-type transcriptional regulator MalT (901 aa).

39-46 (SPAGYGKT) contributes to the ATP binding site. An HTH luxR-type domain is found at 829–894 (ELIRTSPLTQ…DAVQHAQQLL (66 aa)). Residues 853–872 (NEQIAGELAVAATTIKTHIR) constitute a DNA-binding region (H-T-H motif).

This sequence belongs to the MalT family. Monomer in solution. Oligomerizes to an active state in the presence of the positive effectors ATP and maltotriose.

With respect to regulation, activated by ATP and maltotriose, which are both required for DNA binding. Positively regulates the transcription of the maltose regulon whose gene products are responsible for uptake and catabolism of malto-oligosaccharides. Specifically binds to the promoter region of its target genes, recognizing a short DNA motif called the MalT box. This is HTH-type transcriptional regulator MalT from Salmonella choleraesuis (strain SC-B67).